The sequence spans 477 residues: Aspartyl/glutamyl-tRNA(Asn/Gln) amidotransferase subunit B (477 aa).

This sequence belongs to the GatB/GatE family. GatB subfamily. Heterotrimer of A, B and C subunits.

It catalyses the reaction L-glutamyl-tRNA(Gln) + L-glutamine + ATP + H2O = L-glutaminyl-tRNA(Gln) + L-glutamate + ADP + phosphate + H(+). The enzyme catalyses L-aspartyl-tRNA(Asn) + L-glutamine + ATP + H2O = L-asparaginyl-tRNA(Asn) + L-glutamate + ADP + phosphate + 2 H(+). In terms of biological role, allows the formation of correctly charged Asn-tRNA(Asn) or Gln-tRNA(Gln) through the transamidation of misacylated Asp-tRNA(Asn) or Glu-tRNA(Gln) in organisms which lack either or both of asparaginyl-tRNA or glutaminyl-tRNA synthetases. The reaction takes place in the presence of glutamine and ATP through an activated phospho-Asp-tRNA(Asn) or phospho-Glu-tRNA(Gln). This Streptococcus gordonii (strain Challis / ATCC 35105 / BCRC 15272 / CH1 / DL1 / V288) protein is Aspartyl/glutamyl-tRNA(Asn/Gln) amidotransferase subunit B.